Consider the following 302-residue polypeptide: Bifunctional protein FolD (302 aa).

Residues 171–173 (GRS), Ser-196, and Ile-237 contribute to the NADP(+) site.

Belongs to the tetrahydrofolate dehydrogenase/cyclohydrolase family. Homodimer.

It catalyses the reaction (6R)-5,10-methylene-5,6,7,8-tetrahydrofolate + NADP(+) = (6R)-5,10-methenyltetrahydrofolate + NADPH. The enzyme catalyses (6R)-5,10-methenyltetrahydrofolate + H2O = (6R)-10-formyltetrahydrofolate + H(+). It participates in one-carbon metabolism; tetrahydrofolate interconversion. Functionally, catalyzes the oxidation of 5,10-methylenetetrahydrofolate to 5,10-methenyltetrahydrofolate and then the hydrolysis of 5,10-methenyltetrahydrofolate to 10-formyltetrahydrofolate. This chain is Bifunctional protein FolD, found in Sphingopyxis alaskensis (strain DSM 13593 / LMG 18877 / RB2256) (Sphingomonas alaskensis).